We begin with the raw amino-acid sequence, 263 residues long: Endonuclease 8 (263 aa).

The Schiff-base intermediate with DNA role is filled by Pro-2. The Proton donor role is filled by Glu-3. The active-site Proton donor; for beta-elimination activity is Lys-53. DNA is bound by residues Gln-70, Arg-125, and Asn-169. The FPG-type zinc-finger motif lies at 229-263 (KVFHRDGELCERCGGIIEKTTLSSRPFYWCPGCQH). Residue Arg-253 is the Proton donor; for delta-elimination activity of the active site.

The protein belongs to the FPG family. It depends on Zn(2+) as a cofactor.

The enzyme catalyses 2'-deoxyribonucleotide-(2'-deoxyribose 5'-phosphate)-2'-deoxyribonucleotide-DNA = a 3'-end 2'-deoxyribonucleotide-(2,3-dehydro-2,3-deoxyribose 5'-phosphate)-DNA + a 5'-end 5'-phospho-2'-deoxyribonucleoside-DNA + H(+). Its function is as follows. Involved in base excision repair of DNA damaged by oxidation or by mutagenic agents. Acts as a DNA glycosylase that recognizes and removes damaged bases. Has a preference for oxidized pyrimidines, such as thymine glycol, 5,6-dihydrouracil and 5,6-dihydrothymine. Has AP (apurinic/apyrimidinic) lyase activity and introduces nicks in the DNA strand. Cleaves the DNA backbone by beta-delta elimination to generate a single-strand break at the site of the removed base with both 3'- and 5'-phosphates. The sequence is that of Endonuclease 8 from Escherichia coli O157:H7.